A 363-amino-acid polypeptide reads, in one-letter code: Aminomethyltransferase (363 aa).

This sequence belongs to the GcvT family. The glycine cleavage system is composed of four proteins: P, T, L and H.

The enzyme catalyses N(6)-[(R)-S(8)-aminomethyldihydrolipoyl]-L-lysyl-[protein] + (6S)-5,6,7,8-tetrahydrofolate = N(6)-[(R)-dihydrolipoyl]-L-lysyl-[protein] + (6R)-5,10-methylene-5,6,7,8-tetrahydrofolate + NH4(+). Its function is as follows. The glycine cleavage system catalyzes the degradation of glycine. The polypeptide is Aminomethyltransferase (Nitrosomonas europaea (strain ATCC 19718 / CIP 103999 / KCTC 2705 / NBRC 14298)).